Here is a 344-residue protein sequence, read N- to C-terminus: MALTPRIAIDAMGGDVGVRVMLAGAAMARHKHDGLRFILVGDEERIKAALDNHPNLRAASDIIHTDGVVSGEDKPSQALRKAKSTSMGLAIDAVKRGDAGGAVSAGNTGALMAMAKLALRTMPGIDRPALAALLPTLGDNDVVMLDLGANTECDATNLTQFAVMGAAYARTAMGLERPRVALLNIGTEELKGTDEIRDAAALLRGAEGLPMQFAGFIEGDKLSRGDVDVIVHDGFSGNIALKTIEGTARFVTDLLRRAFTSSTRSKIGFLISRPATELLRHHLDPNNHNGAVFLGLNGVVLKSHGSADAKGVANCVHLCAELIEKDITRQVTEDLANFRRGDAA.

It belongs to the PlsX family. As to quaternary structure, homodimer. Probably interacts with PlsY.

Its subcellular location is the cytoplasm. The enzyme catalyses a fatty acyl-[ACP] + phosphate = an acyl phosphate + holo-[ACP]. It functions in the pathway lipid metabolism; phospholipid metabolism. In terms of biological role, catalyzes the reversible formation of acyl-phosphate (acyl-PO(4)) from acyl-[acyl-carrier-protein] (acyl-ACP). This enzyme utilizes acyl-ACP as fatty acyl donor, but not acyl-CoA. This Sphingopyxis alaskensis (strain DSM 13593 / LMG 18877 / RB2256) (Sphingomonas alaskensis) protein is Phosphate acyltransferase.